The sequence spans 655 residues: p-hydroxybenzoic acid efflux pump subunit AaeB (655 aa).

The Periplasmic segment spans residues 1–12 (MGIFSIANQHIR). A helical transmembrane segment spans residues 13-33 (FAVKLATAIVLALFVGFHFQL). The Cytoplasmic portion of the chain corresponds to 34-37 (ETPR). Residues 38 to 58 (WAVLTAAIVAAGPAFAAGGEP) form a helical membrane-spanning segment. Residues 59 to 68 (YSGAIRYRGF) lie on the Periplasmic side of the membrane. Residues 69–89 (LRIIGTFIGCIAGLVIIIAMI) form a helical membrane-spanning segment. Residues 90–92 (RAP) are Cytoplasmic-facing. The chain crosses the membrane as a helical span at residues 93 to 113 (LLMILVCCIWAGFCTWISSLV). Over 114–120 (RIENSYA) the chain is Periplasmic. The helical transmembrane segment at 121-141 (WGLAGYTALIIVITIQPEPLL) threads the bilayer. Over 142-151 (TPQFAVERCS) the chain is Cytoplasmic. Residues 152 to 172 (EIVIGIVCAIMADLLFSPRSI) traverse the membrane as a helical segment. Residues 173–369 (KQEVDRELES…RTTLSCILGT (197 aa)) are Periplasmic-facing. The helical transmembrane segment at 370–390 (LFWLWTGWTSGSGAMVMIAVV) threads the bilayer. The Cytoplasmic portion of the chain corresponds to 391–406 (TSLAMRLPNPRMVAID). Residues 407–427 (FIYGTLAALPLGLLYFLVIIP) form a helical membrane-spanning segment. Residues 428–430 (NTQ) are Periplasmic-facing. A helical transmembrane segment spans residues 431-451 (QSMLLLCISLAVLGFFLGIEV). At 452–458 (QKRRLGS) the chain is on the cytoplasmic side. A helical transmembrane segment spans residues 459 to 479 (MGALASTINIIVLDNPMTFHF). At 480-481 (SQ) the chain is on the periplasmic side. Residues 482–502 (FLDSALGQIVGCVLAFTVILL) traverse the membrane as a helical segment. The Cytoplasmic segment spans residues 503 to 655 (VRDKSRDRTG…HKYQHALTDS (153 aa)).

The protein belongs to the aromatic acid exporter ArAE (TC 2.A.85) family.

The protein resides in the cell inner membrane. In terms of biological role, forms an efflux pump with AaeA. Could function as a metabolic relief valve, allowing to eliminate certain compounds when they accumulate to high levels in the cell. The protein is p-hydroxybenzoic acid efflux pump subunit AaeB of Shigella flexneri.